Consider the following 31-residue polypeptide: Photosystem II reaction center protein T (31 aa).

Residues 3–23 (SVAYIIVLAMALSVLFFAIAF) traverse the membrane as a helical segment.

This sequence belongs to the PsbT family. PSII is composed of 1 copy each of membrane proteins PsbA, PsbB, PsbC, PsbD, PsbE, PsbF, PsbH, PsbI, PsbJ, PsbK, PsbL, PsbM, PsbT, PsbX, PsbY, PsbZ, Psb30/Ycf12, peripheral proteins PsbO, CyanoQ (PsbQ), PsbU, PsbV and a large number of cofactors. It forms dimeric complexes.

It localises to the cellular thylakoid membrane. Found at the monomer-monomer interface of the photosystem II (PS II) dimer, plays a role in assembly and dimerization of PSII. PSII is a light-driven water plastoquinone oxidoreductase, using light energy to abstract electrons from H(2)O, generating a proton gradient subsequently used for ATP formation. The sequence is that of Photosystem II reaction center protein T from Picosynechococcus sp. (strain ATCC 27264 / PCC 7002 / PR-6) (Agmenellum quadruplicatum).